The following is a 1242-amino-acid chain: MFPYPTLNYSPMAPVNPMAYRDPNPPRRRWRPFRPPLAAQIEDLRRSIANLTFKQRAPNPPAGPPAKRKKPAPKPKPAAPKKKRQPPPAKKQKRKQKPGKRQRMCMKLESDKTFPILLNGQVNGYACVVGGRVFKPLHVEGKIDNEQLAAIKLKKASIYDLEYGDVPQCMKSDTLQYTSEKPPGFYNWHHGAVQYENNRFTVPRGVGGKGDSGRPILDNRGRVVAIVLGGANEGSRTALSVVTWNQKGVTVKDTPEGSEPWSLTTVMCVLANITFPCDQPPCMPCCYEKNPHETLTMLEQNYDSQAYDQLLEAAVKCNSRRTRRDLETHFTQYKLARPYIADCSNCGHGRCDSPIAIEDVRGNAHAGYIRIQTSAMFGLKSDGVDLAYMSFMNGKTLKAIKIEHLYARTSAPCSLVSYHGYYLLAQCPPGDTVTVGFQDGANKHMCTIAHKVEFRPVGREKYRHPPAHGVELPCNKYTHKRADQGHYVEMHQPGLVADHSLLSLSSTKVKITVPSGSQVKYYCKCPDVQEGTTSGDHTTTCTDLKQCRAYLIDNKKWVFNSGKLPRGEGETFKGKLHVPFVPVTSKCTATLAPEPLVEHKHRSLILHLHPEHPTLLTTRALGNDARPTRQWVDQPTTVNFTVTGEGFEYTWGNHPPKRVWAQESGEGNPHGWPHEVVIYYYNRYPMTTIVGLCTCAAIIMVSCITSVWLLCRTRNLCITPYRLAPNAQVPILLAVLCCVKPTRADDTLQVLNYLWNNNQNFFWMQTLIPLAALIVCMRMLRCLLCCGPAFLLVCGALGAAAYEHTAVMPNKVGIPYKALVERPGYAPVHLQIQLVTTKIIPSANLEYITCKYKTKVPSPVVKCCGATQCTSKQHPDYQCQVFAGVYPFMWGGAYCFCDTENTQMSEAYIERAEECSVDQAKAYKVHTGTVQAVVNITYGSVSWRSADVYVNGETPAKIGDAKLTIGPLSSAWTPFDSKVVVYGHEVYNYDFPEYGTGKAGSFGDLQSRTLTSNDLYANTNLKLQRPQPGVVHTPYTQAPSGFERWKKDRGAPLNDIAPFGCTIALDPLRAENCAVGNIPLSIDIPDAAFTRISETPTVSDLECKITECTYASDFGGIATVAYKASKAGNCPIHSPSGIAVIKENDVTLADSGSFTFHFSTASIHPAFKMQICTSVVTCKGDCKPPKDHIVDYPAQHTETFTSAVSATAWSWLKVLVGSTSAFIVLGLIATAVVALVLFTHKH.

Residues 1–36 are necessary for nucleocapsid assembly and virus assembly; the sequence is MFPYPTLNYSPMAPVNPMAYRDPNPPRRRWRPFRPP. The tract at residues 1 to 104 is disordered; sequence MFPYPTLNYS…KQKPGKRQRM (104 aa). A host transcription inhibition region spans residues 37–70; it reads LAAQIEDLRRSIANLTFKQRAPNPPAGPPAKRKK. The Supraphysiological nuclear export signal signature appears at 44 to 51; the sequence is LRRSIANL. A compositionally biased stretch (basic residues) spans 66–104; sequence AKRKKPAPKPKPAAPKKKRQPPPAKKQKRKQKPGKRQRM. The short motif at 67–70 is the Nuclear localization signal element; sequence KRKK. Residues 83-113 are binding to the viral RNA; the sequence is KRQPPPAKKQKRKQKPGKRQRMCMKLESDKT. The ribosome-binding stretch occupies residues 98–112; that stretch reads PGKRQRMCMKLESDK. Phosphoserine is present on S110. Residues 112–261 form the Peptidase S3 domain; the sequence is KTFPILLNGQ…KDTPEGSEPW (150 aa). T113 carries the phosphothreonine modification. Residues H138, D160, and S212 each act as charge relay system in the active site. Residues 262-273 form a functions as an uncleaved signal peptide for the precursor of protein E3/E2 region; the sequence is SLTTVMCVLANI. The N-linked (GlcNAc...) asparagine; by host glycan is linked to N272. The Extracellular portion of the chain corresponds to 325–688; that stretch reads DLETHFTQYK…YYYNRYPMTT (364 aa). A helical transmembrane segment spans residues 689–709; that stretch reads IVGLCTCAAIIMVSCITSVWL. The Cytoplasmic portion of the chain corresponds to 710–744; the sequence is LCRTRNLCITPYRLAPNAQVPILLAVLCCVKPTRA. 3 S-palmitoyl cysteine; by host lipidation sites follow: C717, C737, and C738. The interval 717 to 737 is transient transmembrane before p62-6K protein processing; the sequence is CITPYRLAPNAQVPILLAVLC. Residues 745–759 are Extracellular-facing; it reads DDTLQVLNYLWNNNQ. A run of 2 helical transmembrane segments spans residues 760–780 and 781–801; these read NFFWMQTLIPLAALIVCMRML and RCLLCCGPAFLLVCGALGAAA. The Extracellular portion of the chain corresponds to 802–1218; it reads YEHTAVMPNK…WSWLKVLVGS (417 aa). Intrachain disulfides connect C850–C915, C863–C895, C864–C897, C869–C879, C1061–C1073, C1103–C1178, C1108–C1182, and C1130–C1172. Positions 885–902 are E1 fusion peptide loop; that stretch reads VYPFMWGGAYCFCDTENT. A helical transmembrane segment spans residues 1219-1239; the sequence is TSAFIVLGLIATAVVALVLFT. Residues 1240 to 1242 lie on the Cytoplasmic side of the membrane; sequence HKH.

In terms of assembly, part of a tetrameric complex composed of host CRM1, host importin alpha/beta dimer and the viral capsid; this complex blocks the receptor-mediated transport through the nuclear pore. Interacts with host phosphatase PPP1CA; this interaction dephosphorylates the capsid protein, which increases its ability to bind to the viral genome. Interacts with host karyopherin KPNA4; this interaction allows the nuclear import of the viral capsid protein. Interacts with spike glycoprotein E2. Interacts with host IRAK1; the interaction leads to inhibition of IRAK1-dependent signaling. As to quaternary structure, the precursor of protein E3/E2 and E1 form a heterodimer shortly after synthesis. The precursor of protein E3/E2 and E1 form a heterodimer shortly after synthesis. Processing of the precursor of protein E3/E2 into E2 and E3 results in a heterodimer of the spike glycoproteins E2 and E1. Spike at virion surface are constituted of three E2-E1 heterodimers. After target cell attachment and endocytosis, E1 change conformation to form homotrimers. Interacts with 6K protein. In terms of assembly, processing of the precursor of protein E3/E2 into E2 and E3 results in a heterodimer of the spike glycoproteins E2 and E1. Spike at virion surface are constituted of three E2-E1 heterodimers. Interacts with 6K protein. As to quaternary structure, interacts with spike glycoprotein E1. Interacts with spike glycoprotein E2. Structural polyprotein: Specific enzymatic cleavages in vivo yield mature proteins. Capsid protein is auto-cleaved during polyprotein translation, unmasking a signal peptide at the N-terminus of the precursor of E3/E2. The remaining polyprotein is then targeted to the host endoplasmic reticulum, where host signal peptidase cleaves it into pE2, 6K and E1 proteins. pE2 is further processed to mature E3 and E2 by host furin in trans-Golgi vesicle. In terms of processing, phosphorylated on serine and threonine residues. Post-translationally, palmitoylated via thioester bonds. These palmitoylations may induce disruption of the C-terminus transmembrane. This would result in the reorientation of E2 C-terminus from lumenal to cytoplasmic side. N-glycosylated. In terms of processing, palmitoylated via thioester bonds.

Its subcellular location is the virion. It is found in the host cytoplasm. It localises to the host cell membrane. The protein localises to the host nucleus. The protein resides in the virion membrane. It catalyses the reaction Autocatalytic release of the core protein from the N-terminus of the togavirus structural polyprotein by hydrolysis of a -Trp-|-Ser- bond.. Its function is as follows. Forms an icosahedral capsid with a T=4 symmetry composed of 240 copies of the capsid protein surrounded by a lipid membrane through which penetrate 80 spikes composed of trimers of E1-E2 heterodimers. The capsid protein binds to the viral RNA genome at a site adjacent to a ribosome binding site for viral genome translation following genome release. Possesses a protease activity that results in its autocatalytic cleavage from the nascent structural protein. Following its self-cleavage, the capsid protein transiently associates with ribosomes, and within several minutes the protein binds to viral RNA and rapidly assembles into icosahedric core particles. The resulting nucleocapsid eventually associates with the cytoplasmic domain of the spike glycoprotein E2 at the cell membrane, leading to budding and formation of mature virions. In case of infection, new virions attach to target cells and after clathrin-mediated endocytosis their membrane fuses with the host endosomal membrane. This leads to the release of the nucleocapsid into the cytoplasm, followed by an uncoating event necessary for the genomic RNA to become accessible. The uncoating might be triggered by the interaction of capsid proteins with ribosomes. Binding of ribosomes would release the genomic RNA since the same region is genomic RNA-binding and ribosome-binding. Specifically inhibits interleukin-1 receptor-associated kinase 1/IRAK1-dependent signaling during viral entry, representing a means by which the alphaviruses may evade innate immune detection and activation prior to viral gene expression. Inhibits host transcription. Forms a tetrameric complex with XPO1/CRM1 and the nuclear import receptor importin. This complex blocks the central channel of host nuclear pores thereby inhibiting the receptor-mediated nuclear transport and thus the host mRNA and rRNA transcription. The inhibition of transcription is linked to a cytopathic effect on the host cell. Functionally, provides the signal sequence for the translocation of the precursor of protein E3/E2 to the host endoplasmic reticulum. Furin-cleaved E3 remains associated with spike glycoprotein E1 and mediates pH protection of the latter during the transport via the secretory pathway. After virion release from the host cell, the assembly protein E3 is gradually released in the extracellular space. In terms of biological role, plays a role in viral attachment to target host cell, by binding to the cell receptor. Synthesized as a p62 precursor which is processed by furin at the cell membrane just before virion budding, giving rise to E2-E1 heterodimer. The p62-E1 heterodimer is stable, whereas E2-E1 is unstable and dissociate at low pH. p62 is processed at the last step, presumably to avoid E1 fusion activation before its final export to cell surface. E2 C-terminus contains a transitory transmembrane that would be disrupted by palmitoylation, resulting in reorientation of the C-terminal tail from lumenal to cytoplasmic side. This step is critical since E2 C-terminus is involved in budding by interacting with capsid proteins. This release of E2 C-terminus in cytoplasm occurs lately in protein export, and precludes premature assembly of particles at the endoplasmic reticulum membrane. Constitutive membrane protein involved in virus glycoprotein processing, cell permeabilization, and the budding of viral particles. Disrupts the calcium homeostasis of the cell, probably at the endoplasmic reticulum level. This leads to cytoplasmic calcium elevation. Because of its lipophilic properties, the 6K protein is postulated to influence the selection of lipids that interact with the transmembrane domains of the glycoproteins, which, in turn, affects the deformability of the bilayer required for the extreme curvature that occurs as budding proceeds. Present in low amount in virions, about 3% compared to viral glycoproteins. Its function is as follows. Class II viral fusion protein. Fusion activity is inactive as long as E1 is bound to E2 in mature virion. After virus attachment to target cell and endocytosis, acidification of the endosome would induce dissociation of E1/E2 heterodimer and concomitant trimerization of the E1 subunits. This E1 trimer is fusion active, and promotes release of viral nucleocapsid in cytoplasm after endosome and viral membrane fusion. Efficient fusion requires the presence of cholesterol and sphingolipid in the target membrane. Fusion is optimal at levels of about 1 molecule of cholesterol per 2 molecules of phospholipids, and is specific for sterols containing a 3-beta-hydroxyl group. This chain is Structural polyprotein, found in Aedes (Human).